The sequence spans 90 residues: Acylphosphatase (90 aa).

Residues 5 to 90 form the Acylphosphatase-like domain; that stretch reads CLKAWVTGRV…DPPPGTFELG (86 aa). Catalysis depends on residues Arg-20 and Asn-38.

This sequence belongs to the acylphosphatase family.

The enzyme catalyses an acyl phosphate + H2O = a carboxylate + phosphate + H(+). This is Acylphosphatase (acyP) from Chromohalobacter salexigens (strain ATCC BAA-138 / DSM 3043 / CIP 106854 / NCIMB 13768 / 1H11).